Reading from the N-terminus, the 572-residue chain is Proline--tRNA ligase (572 aa).

The protein belongs to the class-II aminoacyl-tRNA synthetase family. ProS type 1 subfamily. Homodimer.

The protein localises to the cytoplasm. The enzyme catalyses tRNA(Pro) + L-proline + ATP = L-prolyl-tRNA(Pro) + AMP + diphosphate. Catalyzes the attachment of proline to tRNA(Pro) in a two-step reaction: proline is first activated by ATP to form Pro-AMP and then transferred to the acceptor end of tRNA(Pro). As ProRS can inadvertently accommodate and process non-cognate amino acids such as alanine and cysteine, to avoid such errors it has two additional distinct editing activities against alanine. One activity is designated as 'pretransfer' editing and involves the tRNA(Pro)-independent hydrolysis of activated Ala-AMP. The other activity is designated 'posttransfer' editing and involves deacylation of mischarged Ala-tRNA(Pro). The misacylated Cys-tRNA(Pro) is not edited by ProRS. The chain is Proline--tRNA ligase from Dichelobacter nodosus (strain VCS1703A).